Here is a 401-residue protein sequence, read N- to C-terminus: Formate-dependent phosphoribosylglycinamide formyltransferase (401 aa).

N(1)-(5-phospho-beta-D-ribosyl)glycinamide is bound by residues 27 to 28 and glutamate 87; that span reads EL. ATP contacts are provided by residues arginine 119, lysine 160, 165-170, 200-203, and glutamate 208; these read SSGKGQ and EELV. The 190-residue stretch at 124–313 folds into the ATP-grasp domain; it reads EFAAEEVGVT…QFDLHLRAIL (190 aa). Positions 272 and 284 each coordinate Mg(2+). N(1)-(5-phospho-beta-D-ribosyl)glycinamide contacts are provided by residues aspartate 291, lysine 361, and 368–369; that span reads RR.

This sequence belongs to the PurK/PurT family. As to quaternary structure, homodimer.

It catalyses the reaction N(1)-(5-phospho-beta-D-ribosyl)glycinamide + formate + ATP = N(2)-formyl-N(1)-(5-phospho-beta-D-ribosyl)glycinamide + ADP + phosphate + H(+). Its pathway is purine metabolism; IMP biosynthesis via de novo pathway; N(2)-formyl-N(1)-(5-phospho-D-ribosyl)glycinamide from N(1)-(5-phospho-D-ribosyl)glycinamide (formate route): step 1/1. In terms of biological role, involved in the de novo purine biosynthesis. Catalyzes the transfer of formate to 5-phospho-ribosyl-glycinamide (GAR), producing 5-phospho-ribosyl-N-formylglycinamide (FGAR). Formate is provided by PurU via hydrolysis of 10-formyl-tetrahydrofolate. The sequence is that of Formate-dependent phosphoribosylglycinamide formyltransferase from Haloquadratum walsbyi (strain DSM 16790 / HBSQ001).